The chain runs to 501 residues: G protein-activated inward rectifier potassium channel 1 (501 aa).

The interval 1–40 is disordered; it reads MSALRRKFGDDYQVVTTSSSGSGLQPQGPGQGPQQQLVPK. At 1 to 80 the chain is on the cytoplasmic side; it reads MSALRRKFGD…LFTTLVDLKW (80 aa). Low complexity predominate over residues 18–37; the sequence is SSSGSGLQPQGPGQGPQQQL. Residues 81–105 form a helical membrane-spanning segment; it reads RWNLFIFILTYTVAWLFMASMWWVI. Topologically, residues 106 to 129 are extracellular; it reads AYTRGDLNKAHVGNYTPCVANVYN. Asparagine 119 carries N-linked (GlcNAc...) asparagine glycosylation. The segment at residues 130–141 is an intramembrane region (helical; Pore-forming); it reads FPSAFLFFIETE. Residues 142–148 constitute an intramembrane region (pore-forming); that stretch reads ATIGYGY. The Selectivity filter signature appears at 143 to 148; the sequence is TIGYGY. At 149–157 the chain is on the extracellular side; sequence RYITDKCPE. The helical transmembrane segment at 158 to 179 threads the bilayer; the sequence is GIILFLFQSILGSIVDAFLIGC. Topologically, residues 180-501 are cytoplasmic; the sequence is MFIKMSQPKK…LRKMNSDRFT (322 aa). The interval 182-209 is polyphosphoinositide (PIP2)-binding; it reads IKMSQPKKRAETLMFSEHAVISMRDGKL. 2 positions are modified to phosphoserine: serine 385 and serine 424. The span at 456–467 shows a compositional bias: polar residues; it reads TKMLSDPMSQSV. Positions 456–501 are disordered; sequence TKMLSDPMSQSVADLPPKLQKMAGGPTRMEGNLPAKLRKMNSDRFT.

Belongs to the inward rectifier-type potassium channel (TC 1.A.2.1) family. KCNJ3 subfamily. In terms of assembly, associates with KCNJ5/GIRK4 or KCNJ6/GIRK2 to form a G-protein activated heteromultimer pore-forming unit. The resulting inward current is much larger. Associates with KCNJ9/GIRK3 to form a G-protein activated heteromultimer pore-forming unit.

Its subcellular location is the membrane. The catalysed reaction is K(+)(in) = K(+)(out). Heteromultimer composed of KCNJ3/GIRK1 and KCNJ5/GIRK4 is activated by phosphatidylinositol 4,5 biphosphate (PtdIns(4,5)P2). Functionally, inward rectifier potassium channels are characterized by a greater tendency to allow potassium to flow into the cell rather than out of it. Their voltage dependence is regulated by the concentration of extracellular potassium; as external potassium is raised, the voltage range of the channel opening shifts to more positive voltages. The inward rectification is mainly due to the blockage of outward current by internal magnesium. This potassium channel is controlled by G proteins. This receptor plays a crucial role in regulating the heartbeat. Forms a functional channel in association with KCNJ9/GIRK3. The sequence is that of G protein-activated inward rectifier potassium channel 1 (Kcnj3) from Rattus norvegicus (Rat).